The following is a 160-amino-acid chain: Transcription antitermination protein NusB (160 aa).

It belongs to the NusB family.

Its function is as follows. Involved in transcription antitermination. Required for transcription of ribosomal RNA (rRNA) genes. Binds specifically to the boxA antiterminator sequence of the ribosomal RNA (rrn) operons. The sequence is that of Transcription antitermination protein NusB from Sinorhizobium medicae (strain WSM419) (Ensifer medicae).